A 199-amino-acid chain; its full sequence is uncharacterized protein (199 aa).

A disordered region spans residues 1–48; it reads MSANEFYSSGQQGQYNQQNNQERTGAPNNGQYGADNGNPNGERGLFST. An N-acetylserine modification is found at serine 2. Over residues 7–21 the composition is skewed to low complexity; sequence YSSGQQGQYNQQNNQ. Positions 22–31 are enriched in polar residues; that stretch reads ERTGAPNNGQ. 2 positions are modified to phosphoserine: serine 53 and serine 70. A disordered region spans residues 89-199; it reads RKEHKQQEQY…RQGFNGGSRW (111 aa). 3 stretches are compositionally biased toward gly residues: residues 124–163, 170–179, and 186–199; these read GGFG…GFGG, GGPGGQGFGG, and GGQG…GSRW.

It localises to the mitochondrion. This is an uncharacterized protein from Saccharomyces cerevisiae (strain ATCC 204508 / S288c) (Baker's yeast).